Here is a 386-residue protein sequence, read N- to C-terminus: 4-hydroxy-3-methylbut-2-en-1-yl diphosphate synthase (flavodoxin) (386 aa).

Residues C289, C292, C324, and E331 each contribute to the [4Fe-4S] cluster site.

Belongs to the IspG family. [4Fe-4S] cluster is required as a cofactor.

The catalysed reaction is (2E)-4-hydroxy-3-methylbut-2-enyl diphosphate + oxidized [flavodoxin] + H2O + 2 H(+) = 2-C-methyl-D-erythritol 2,4-cyclic diphosphate + reduced [flavodoxin]. Its pathway is isoprenoid biosynthesis; isopentenyl diphosphate biosynthesis via DXP pathway; isopentenyl diphosphate from 1-deoxy-D-xylulose 5-phosphate: step 5/6. Its function is as follows. Converts 2C-methyl-D-erythritol 2,4-cyclodiphosphate (ME-2,4cPP) into 1-hydroxy-2-methyl-2-(E)-butenyl 4-diphosphate. The polypeptide is 4-hydroxy-3-methylbut-2-en-1-yl diphosphate synthase (flavodoxin) (Nitratidesulfovibrio vulgaris (strain ATCC 29579 / DSM 644 / CCUG 34227 / NCIMB 8303 / VKM B-1760 / Hildenborough) (Desulfovibrio vulgaris)).